The sequence spans 78 residues: HssA/B-like protein 30 (78 aa).

Positions 1–32 (MTLFSSITSISKTNTSSKSSVNSLSGSSLSMG) are disordered.

The protein belongs to the hssA/B family.

In Dictyostelium discoideum (Social amoeba), this protein is HssA/B-like protein 30 (hssl30).